Reading from the N-terminus, the 243-residue chain is 1-(5-phosphoribosyl)-5-[(5-phosphoribosylamino)methylideneamino] imidazole-4-carboxamide isomerase (243 aa).

The Proton acceptor role is filled by D8. The active-site Proton donor is the D129.

The protein belongs to the HisA/HisF family.

Its subcellular location is the cytoplasm. The catalysed reaction is 1-(5-phospho-beta-D-ribosyl)-5-[(5-phospho-beta-D-ribosylamino)methylideneamino]imidazole-4-carboxamide = 5-[(5-phospho-1-deoxy-D-ribulos-1-ylimino)methylamino]-1-(5-phospho-beta-D-ribosyl)imidazole-4-carboxamide. The protein operates within amino-acid biosynthesis; L-histidine biosynthesis; L-histidine from 5-phospho-alpha-D-ribose 1-diphosphate: step 4/9. This is 1-(5-phosphoribosyl)-5-[(5-phosphoribosylamino)methylideneamino] imidazole-4-carboxamide isomerase from Citrifermentans bemidjiense (strain ATCC BAA-1014 / DSM 16622 / JCM 12645 / Bem) (Geobacter bemidjiensis).